Here is a 1014-residue protein sequence, read N- to C-terminus: Poly [ADP-ribose] polymerase 1 (1014 aa).

The residue at position 2 (Ala-2) is an N-acetylalanine. The segment at 9-93 (YRVEYAKSGR…KVKKTAEAGG (85 aa)) adopts a PARP-type 1 zinc-finger fold. The Zn(2+) site is built by Cys-21 and Cys-24. Ser-41 carries the phosphoserine modification. Zn(2+) contacts are provided by His-53 and Cys-56. N6-acetyllysine is present on residues Lys-97 and Lys-105. A PARP-type 2 zinc finger spans residues 113-203 (FAAEYAKSNR…ALKKQLPGVK (91 aa)). Zn(2+) is bound by residues Cys-125 and Cys-128. The residue at position 131 (Lys-131) is an N6-acetyllysine. 2 residues coordinate Zn(2+): His-159 and Cys-162. Residues Ser-177, Ser-179, and Ser-185 each carry the phosphoserine modification. Residue Lys-192 forms a Glycyl lysine isopeptide (Lys-Gly) (interchain with G-Cter in SUMO2) linkage. Residues 198–233 (QLPGVKSEGKRKGDEVDGVDEVAKKKSKKEKDKDSK) are disordered. Lys-203 participates in a covalent cross-link: Glycyl lysine isopeptide (Lys-Gly) (interchain with G-Cter in SUMO1); alternate. Residue Lys-203 forms a Glycyl lysine isopeptide (Lys-Gly) (interchain with G-Cter in SUMO2); alternate linkage. Residues 204–233 (SEGKRKGDEVDGVDEVAKKKSKKEKDKDSK) show a composition bias toward basic and acidic residues. 2 short sequence motifs (nuclear localization signal) span residues 207-209 (KRK) and 221-226 (KKKSKK). Residues 225-359 (KKEKDKDSKL…VKKQDRIFPP (135 aa)) form the PADR1 zinc-binding domain. A Glycyl lysine isopeptide (Lys-Gly) (interchain with G-Cter in SUMO2) cross-link involves residue Lys-249. Residues Ser-274 and Ser-277 each carry the phosphoserine modification. Positions 290 to 332 (GALLPCEECSGQLVFKSDAYYCTGDVTAWTKCMVKTQTPNRKE) are zinc ribbon. The Zn(2+) site is built by Cys-295, Cys-298, Cys-311, and Cys-321. The tract at residues 361-385 (TSASVAATPPPSTASAPAAVNSSAS) is disordered. Position 364 is a phosphoserine (Ser-364). Thr-368 is subject to Phosphothreonine. An automodification domain region spans residues 373-524 (TASAPAAVNS…GINKSEKRMK (152 aa)). A BRCT domain is found at 385 to 476 (SADKPLSNMK…KSLQELFLAH (92 aa)). Asp-387 is subject to PolyADP-ribosyl aspartic acid. Glu-407, Glu-413, Glu-435, Glu-437, Glu-444, Glu-445, Glu-448, and Glu-456 each carry polyADP-ribosyl glutamic acid. Lys-467 participates in a covalent cross-link: Glycyl lysine isopeptide (Lys-Gly) (interchain with G-Cter in SUMO2). A polyADP-ribosyl glutamic acid mark is found at Glu-471 and Glu-484. A Glycyl lysine isopeptide (Lys-Gly) (interchain with G-Cter in SUMO1); alternate cross-link involves residue Lys-486. Residue Lys-486 forms a Glycyl lysine isopeptide (Lys-Gly) (interchain with G-Cter in SUMO2); alternate linkage. 2 positions are modified to polyADP-ribosyl glutamic acid: Glu-488 and Glu-491. Residues Ser-499, Ser-504, and Ser-507 each carry the ADP-ribosylserine modification. Lys-512 is covalently cross-linked (Glycyl lysine isopeptide (Lys-Gly) (interchain with G-Cter in SUMO2)). A polyADP-ribosyl glutamic acid mark is found at Glu-513 and Glu-514. Ser-519 carries the post-translational modification ADP-ribosylserine. Glu-520 carries the polyADP-ribosyl glutamic acid modification. Lys-521 carries the N6-(ADP-ribosyl)lysine modification. A Glycyl lysine isopeptide (Lys-Gly) (interchain with G-Cter in SUMO2) cross-link involves residue Lys-528. One can recognise a WGR domain in the interval 542-638 (SAHVLEKGGK…KNFTKYPKKF (97 aa)). Thr-594 carries the post-translational modification Phosphothreonine; by PRKDC. 2 positions are modified to N6-acetyllysine: Lys-600 and Lys-621. One can recognise a PARP alpha-helical domain in the interval 662–779 (KSKLPKPVQD…DIEVAYSLLR (118 aa)). Residue Lys-748 forms a Glycyl lysine isopeptide (Lys-Gly) (interchain with G-Cter in SUMO1); alternate linkage. A Glycyl lysine isopeptide (Lys-Gly) (interchain with G-Cter in SUMO2); alternate cross-link involves residue Lys-748. A phosphoserine mark is found at Ser-782 and Ser-786. Positions 788–1014 (DPIDVNYEKL…LKFNFKTSLW (227 aa)) constitute a PARP catalytic domain. Residues 862 to 864 (HGS), Gly-871, Arg-878, and Ser-904 contribute to the NAD(+) site. Glu-988 (for poly [ADP-ribose] polymerase activity) is an active-site residue.

The protein belongs to the ARTD/PARP family. As to quaternary structure, homodimer; PARP-type zinc-fingers from separate PARP1 molecules form a dimer module that specifically recognizes DNA strand breaks. Heterodimer; heterodimerizes with PARP2. Interacts (via the PARP catalytic domain) with HPF1. Interacts with NMNAT1. Interacts with nucleosomes; with a preference for nucleosomes containing H2A.X. Interacts with APTX. Component of a base excision repair (BER) complex, containing at least XRCC1, PARP1, PARP2, POLB and LRIG3. Interacts with SRY. The SWAP complex consists of NPM1, NCL, PARP1 and SWAP70. Interacts with TIAM2. Interacts with PARP3; leading to activate PARP1 in absence of DNA. Interacts (when poly-ADP-ribosylated) with CHD1L (via macro domain). Interacts with the DNA polymerase alpha catalytic subunit POLA1; this interaction functions as part of the control of replication fork progression. Interacts with EEF1A1 and TXK. Interacts with RNF4. Interacts with RNF146. Interacts with ZNF423. Interacts with APLF. Interacts with SNAI1 (via zinc fingers); the interaction requires SNAI1 to be poly-ADP-ribosylated and non-phosphorylated (active) by GSK3B. Interacts (when poly-ADP-ribosylated) with PARP9. Interacts with NR4A3; activates PARP1 by improving acetylation of PARP1 and suppressing the interaction between PARP1 and SIRT1. Interacts (via catalytic domain) with PUM3; the interaction inhibits the poly-ADP-ribosylation activity of PARP1 and the degradation of PARP1 by CASP3 following genotoxic stress. Interacts with ZNF365. Interacts with RRP1B. Interacts with TIMELESS; the interaction is direct. Interacts with CGAS; leading to impede the formation of the PARP1-TIMELESS complex. Interacts with KHDC3L, the interaction is increased following the formation of DNA double-strand breaks. Interacts (when auto-poly-ADP-ribosylated) with XRCC1; leading to inhibit PARP1 ADP-ribosyltransferase activity. Interacts with SPINDOC; promoting PARP1 ADP-ribosyltransferase activity. Interacts with BANF1; leading to inhibit PARP1 ADP-ribosyltransferase activity in response to oxidative DNA damage. Interacts (when sumoylated and ubiquitinated) with VCP/p97; leading to its extraction from chromatin. Interacts with YARS1; Interacts with PACMP micropeptide; interaction. Interacts with PACMP micropeptide; Interacts with PACMP micropeptide; interaction. Interacts (when poly-ADP-ribosylated) with isoform 1 of MACROH2A1; MACROH2A1 specifically binds to poly-ADP-ribose chains and inhibits PARP1 activity, limiting the consumption of nuclear NAD(+). Interacts with CARM1; promoting recruitment to replication forks. Interacts with RECQL. Interacts with ZNF32; the interaction reshapes ZNF432 interacting proteins. Interacts with TPRN; TPRN interacts with a number of DNA damage response proteins, is recruited to sites of DNA damage and may play a role in DNA damage repair. Interacts (when auto-poly-ADP-ribosylated) with AIFM1. In terms of assembly, (Microbial infection) Interacts with human herpesvirus 8 (KSHV) protein RTA/ORF50; this interaction negatively regulates RTA/ORF50 transactivation activity. Post-translationally, poly-ADP-ribosylated on serine, glutamate and aspartate residues by autocatalysis. Auto-ADP-ribosylation on serine takes place following interaction with HPF1. Auto poly-ADP-ribosylation on serine residues promotes its dissociation from chromatin. Poly-ADP-ribosylated by PARP2; poly-ADP-ribosylation mediates the recruitment of CHD1L to DNA damage sites. Mono-ADP-ribosylated at Lys-521 by SIRT6 in response to oxidative stress, promoting recruitment to double-strand breaks (DSBs) sites. Phosphorylated at Thr-594 by PRKDC in response to DNA damage following virus infection, promoting its translocation to the cytosol. Phosphorylated by TXK. In terms of processing, S-nitrosylated, leading to inhibit transcription regulation activity. Post-translationally, proteolytically cleaved by caspase-3 (CASP3) and caspase-7 (CASP7) in response to apoptosis to generate the Poly [ADP-ribose] polymerase 1, processed N-terminus and Poly [ADP-ribose] polymerase 1, processed C-terminus forms. CASP3-mediated cleavage is promoted by the TP53/p53-induced long non-coding RNA SPARCLE, which binds PARP1 in response to genotoxic stress. Sumoylated with SUMO1 or SUMO2 by PIAS4 following prolonged residence (trapping) to chromatin. Sumoylation promotes ubiquitination by RNF4 and removal from chromatin by VCP/p97. In terms of processing, ubiquitinated by RNF4 following sumoylation by PIAS4 in response to prolonged residence (trapping) to chromatin. Ubiquitination promotes removal from chromatin by VCP/p97.

It is found in the chromosome. The protein localises to the nucleus. It localises to the nucleolus. The protein resides in the cytoplasm. Its subcellular location is the cytosol. The catalysed reaction is NAD(+) + (ADP-D-ribosyl)n-acceptor = nicotinamide + (ADP-D-ribosyl)n+1-acceptor + H(+).. The enzyme catalyses L-seryl-[protein] + NAD(+) = O-(ADP-D-ribosyl)-L-seryl-[protein] + nicotinamide + H(+). It carries out the reaction L-aspartyl-[protein] + NAD(+) = 4-O-(ADP-D-ribosyl)-L-aspartyl-[protein] + nicotinamide. It catalyses the reaction L-glutamyl-[protein] + NAD(+) = 5-O-(ADP-D-ribosyl)-L-glutamyl-[protein] + nicotinamide. The catalysed reaction is L-tyrosyl-[protein] + NAD(+) = O-(ADP-D-ribosyl)-L-tyrosyl-[protein] + nicotinamide + H(+). The enzyme catalyses L-histidyl-[protein] + NAD(+) = N(tele)-(ADP-D-ribosyl)-L-histidyl-[protein] + nicotinamide + H(+). With respect to regulation, ADP-ribosyltransferase activity is regulated via an allosteric activation mechanism. In absence of activation signal, PARP1 is autoinhibited by the PARP alpha-helical domain (also named HD region), which prevents effective NAD(+)-binding. Activity is highly stimulated by signals, such as DNA strand breaks. Binding to damaged DNA unfolds the PARP alpha-helical domain, relieving autoinhibition. Poly-ADP-ribosyltransferase activity is tightly regulated and PARP1 is removed from damaged chromatin following initial poly-ADP-ribosylation of chromatin to avoid prolonged residence (trapping) that has cytotoxic consequences. A number of factors (VCP/p97) or post-translational modifications (auto-poly-ADP-ribosylation or ubiquitination) promote PARP1 removal from chromatin. ADP-ribosyltransferase activity is inhibited by a number of PARP inhibitors (PARPi) compounds, that are used the treatment of breast or ovarian cancers that have defects in DNA repair by homologous recombination. PARPi molecules can be classified in three categories: type I compounds (EB-47, UKTT15 and BAD) that promote allosteric retention of PARP1 on DNA, type II inhibitors (talazoparib and olaparib) that mediate a non-allosteric inhibition, and type III inhibitors (rucaparib, niraparib, and veliparib) that promote allosteric release from DNA. Trapping to chromatin by PARPi molecules triggers activation of the cGAS-STING pathway. In terms of biological role, poly-ADP-ribosyltransferase that mediates poly-ADP-ribosylation of proteins and plays a key role in DNA repair. Mediates glutamate, aspartate, serine, histidine or tyrosine ADP-ribosylation of proteins: the ADP-D-ribosyl group of NAD(+) is transferred to the acceptor carboxyl group of target residues and further ADP-ribosyl groups are transferred to the 2'-position of the terminal adenosine moiety, building up a polymer with an average chain length of 20-30 units. Serine ADP-ribosylation of proteins constitutes the primary form of ADP-ribosylation of proteins in response to DNA damage. Specificity for the different amino acids is conferred by interacting factors, such as HPF1 and NMNAT1. Following interaction with HPF1, catalyzes serine ADP-ribosylation of target proteins; HPF1 confers serine specificity by completing the PARP1 active site. Also catalyzes tyrosine ADP-ribosylation of target proteins following interaction with HPF1. Following interaction with NMNAT1, catalyzes glutamate and aspartate ADP-ribosylation of target proteins; NMNAT1 confers glutamate and aspartate specificity. PARP1 initiates the repair of DNA breaks: recognizes and binds DNA breaks within chromatin and recruits HPF1, licensing serine ADP-ribosylation of target proteins, such as histones (H2BS6ADPr and H3S10ADPr), thereby promoting decompaction of chromatin and the recruitment of repair factors leading to the reparation of DNA strand breaks. HPF1 initiates serine ADP-ribosylation but restricts the polymerase activity of PARP1 in order to limit the length of poly-ADP-ribose chains. In addition to base excision repair (BER) pathway, also involved in double-strand breaks (DSBs) repair: together with TIMELESS, accumulates at DNA damage sites and promotes homologous recombination repair by mediating poly-ADP-ribosylation. Mediates the poly-ADP-ribosylation of a number of proteins, including itself, APLF, CHFR, RPA1 and NFAT5. In addition to proteins, also able to ADP-ribosylate DNA: catalyzes ADP-ribosylation of DNA strand break termini containing terminal phosphates and a 2'-OH group in single- and double-stranded DNA, respectively. Required for PARP9 and DTX3L recruitment to DNA damage sites. PARP1-dependent PARP9-DTX3L-mediated ubiquitination promotes the rapid and specific recruitment of 53BP1/TP53BP1, UIMC1/RAP80, and BRCA1 to DNA damage sites. PARP1-mediated DNA repair in neurons plays a role in sleep: senses DNA damage in neurons and promotes sleep, facilitating efficient DNA repair. In addition to DNA repair, also involved in other processes, such as transcription regulation, programmed cell death, membrane repair, adipogenesis and innate immunity. Acts as a repressor of transcription: binds to nucleosomes and modulates chromatin structure in a manner similar to histone H1, thereby altering RNA polymerase II. Acts both as a positive and negative regulator of transcription elongation, depending on the context. Acts as a positive regulator of transcription elongation by mediating poly-ADP-ribosylation of NELFE, preventing RNA-binding activity of NELFE and relieving transcription pausing. Acts as a negative regulator of transcription elongation in response to DNA damage by catalyzing poly-ADP-ribosylation of CCNT1, disrupting the phase separation activity of CCNT1 and subsequent activation of CDK9. Involved in replication fork progression following interaction with CARM1: mediates poly-ADP-ribosylation at replication forks, slowing fork progression. Poly-ADP-ribose chains generated by PARP1 also play a role in poly-ADP-ribose-dependent cell death, a process named parthanatos. Also acts as a negative regulator of the cGAS-STING pathway. Acts by mediating poly-ADP-ribosylation of CGAS: PARP1 translocates into the cytosol following phosphorylation by PRKDC and catalyzes poly-ADP-ribosylation and inactivation of CGAS. Acts as a negative regulator of adipogenesis: catalyzes poly-ADP-ribosylation of histone H2B on 'Glu-35' (H2BE35ADPr) following interaction with NMNAT1, inhibiting phosphorylation of H2B at 'Ser-36' (H2BS36ph), thereby blocking expression of pro-adipogenetic genes. Involved in the synthesis of ATP in the nucleus, together with NMNAT1, PARG and NUDT5. Nuclear ATP generation is required for extensive chromatin remodeling events that are energy-consuming. Promotes AIFM1-mediated apoptosis. This form, which translocates into the cytoplasm following cleavage by caspase-3 (CASP3) and caspase-7 (CASP7) in response to apoptosis, is auto-poly-ADP-ribosylated and serves as a poly-ADP-ribose carrier to induce AIFM1-mediated apoptosis. Functionally, this cleavage form irreversibly binds to DNA breaks and interferes with DNA repair, promoting DNA damage-induced apoptosis. This chain is Poly [ADP-ribose] polymerase 1, found in Homo sapiens (Human).